The sequence spans 278 residues: Large ribosomal subunit protein uL2 (278 aa).

The segment at 226–278 (MNPIDHPHGGGEGKTAAGRHPVSPWGTPSKGSRTRKNKRTSNMIVRSRYSKKG) is disordered.

Belongs to the universal ribosomal protein uL2 family. In terms of assembly, part of the 50S ribosomal subunit. Forms a bridge to the 30S subunit in the 70S ribosome.

Functionally, one of the primary rRNA binding proteins. Required for association of the 30S and 50S subunits to form the 70S ribosome, for tRNA binding and peptide bond formation. It has been suggested to have peptidyltransferase activity; this is somewhat controversial. Makes several contacts with the 16S rRNA in the 70S ribosome. The polypeptide is Large ribosomal subunit protein uL2 (Nitrosomonas europaea (strain ATCC 19718 / CIP 103999 / KCTC 2705 / NBRC 14298)).